A 399-amino-acid polypeptide reads, in one-letter code: tRNA-specific 2-thiouridylase MnmA (399 aa).

ATP-binding positions include 18 to 25 and L44; that span reads AMSGGVDS. Residue C112 is the Nucleophile of the active site. C112 and C213 are oxidised to a cystine. G136 lines the ATP pocket. The interval 163–165 is interaction with tRNA; sequence RDQ. The active-site Cysteine persulfide intermediate is the C213.

Belongs to the MnmA/TRMU family.

The protein resides in the cytoplasm. It catalyses the reaction S-sulfanyl-L-cysteinyl-[protein] + uridine(34) in tRNA + AH2 + ATP = 2-thiouridine(34) in tRNA + L-cysteinyl-[protein] + A + AMP + diphosphate + H(+). Catalyzes the 2-thiolation of uridine at the wobble position (U34) of tRNA, leading to the formation of s(2)U34. This chain is tRNA-specific 2-thiouridylase MnmA, found in Rhizobium leguminosarum bv. trifolii (strain WSM2304).